We begin with the raw amino-acid sequence, 216 residues long: Flagellin B3 (216 aa).

A propeptide spanning residues 1-11 (MLLDYIKSRRG) is cleaved from the precursor.

It belongs to the archaeal flagellin family.

The protein localises to the archaeal flagellum. Flagellin is the subunit protein which polymerizes to form the filaments of archaeal flagella. The sequence is that of Flagellin B3 (flaB3) from Methanocaldococcus jannaschii (strain ATCC 43067 / DSM 2661 / JAL-1 / JCM 10045 / NBRC 100440) (Methanococcus jannaschii).